Here is a 583-residue protein sequence, read N- to C-terminus: Phosphoglucomutase, cytoplasmic 1 (583 aa).

Residues Arg25 and Ser124 each coordinate alpha-D-glucose 1,6-bisphosphate. The active-site Phosphoserine intermediate is Ser124. Ser124, Asp300, Asp302, and Asp304 together coordinate Mg(2+). Ser124 carries the post-translational modification Phosphoserine. 6 residues coordinate alpha-D-glucose 1,6-bisphosphate: Asp304, Arg305, Thr368, Glu387, Ser389, and Lys400.

The protein belongs to the phosphohexose mutase family. Monomer. The cofactor is Mg(2+). Autophosphorylated. In terms of tissue distribution, mostly expressed in roots and coleoptiles, and, to a lower extent, in leaves, pollen and developing seeds.

It localises to the cytoplasm. It catalyses the reaction alpha-D-glucose 1-phosphate = alpha-D-glucose 6-phosphate. The catalysed reaction is O-phospho-L-seryl-[protein] + alpha-D-glucose 1-phosphate = alpha-D-glucose 1,6-bisphosphate + L-seryl-[protein]. It carries out the reaction alpha-D-glucose 1,6-bisphosphate + L-seryl-[protein] = O-phospho-L-seryl-[protein] + alpha-D-glucose 6-phosphate. Its function is as follows. Catalyzes the reversible isomerization of alpha-D-glucose 1-phosphate to alpha-D-glucose 6-phosphate. The mechanism proceeds via the intermediate compound alpha-D-glucose 1,6-bisphosphate. This enzyme participates in both the breakdown and synthesis of glucose. The chain is Phosphoglucomutase, cytoplasmic 1 from Zea mays (Maize).